Reading from the N-terminus, the 209-residue chain is Transmembrane 4 L6 family member 19 (209 aa).

Residues 1 to 16 lie on the Cytoplasmic side of the membrane; it reads MVSSPCTQASSRTCSR. The chain crosses the membrane as a helical span at residues 17–37; it reads ILGLSLGTAALFAAGANVALL. Topologically, residues 38-59 are extracellular; that stretch reads LPNWDVTYLLRGLLGRHAMLGT. A helical membrane pass occupies residues 60-80; it reads GLWGGGLMVLTAAILISLMGW. Residues 81–93 lie on the Cytoplasmic side of the membrane; that stretch reads RYGCFSKSGLCRS. Residues 94-114 form a helical membrane-spanning segment; it reads VLTALLSGGLALLGALICFVT. Residues 115 to 175 are Extracellular-facing; it reads SGVALKDGPF…PSAAVVWHVS (61 aa). An N-linked (GlcNAc...) asparagine glycan is attached at N133. The helical transmembrane segment at 176–196 threads the bilayer; it reads LFSALLCISLLQLLLVVVHVI. Residues 186 to 196 form an important for homodimerization region; that stretch reads LQLLLVVVHVI. The Cytoplasmic portion of the chain corresponds to 197 to 209; the sequence is NSLLGLFCSLCEK.

It belongs to the L6 tetraspanin family. As to quaternary structure, may form homodimers and homooligomers. Interacts with integrins ITGAV and ITGB3. Interacts with components of members of the V0 complex of vacuolar(H+)-ATPase (V-ATPase), including ATP6V0B and ATP6V0D2; this interaction inhibits V1-V0 complex assembly. In terms of tissue distribution, in adipose tissue, expressed by macrophages.

The protein localises to the lysosome membrane. It is found in the cytoplasm. It localises to the cytoskeleton. Its subcellular location is the cell projection. The protein resides in the filopodium. In terms of biological role, negatively regulates vacuolar (H+)-ATPase (V-ATPase) activity by interacting with members of V-ATPase V0 complex and hence inhibiting V1-V0 complex assembly. Required for multinucleation during osteoclast differentiation. This is Transmembrane 4 L6 family member 19 (TM4SF19) from Homo sapiens (Human).